Consider the following 422-residue polypeptide: Glycine amidinotransferase, mitochondrial (422 aa).

Residues 1–37 (MLRVRCLRGGSRGAEAAHFIGSRLGRAFTGWVQRSLQ) constitute a mitochondrion transit peptide. Active-site residues include aspartate 253 and histidine 302. The Amidino-cysteine intermediate role is filled by cysteine 406. Threonine 416 carries the post-translational modification Phosphothreonine.

The protein belongs to the amidinotransferase family. In terms of assembly, homodimer.

Its subcellular location is the mitochondrion inner membrane. It carries out the reaction L-arginine + glycine = guanidinoacetate + L-ornithine. Its pathway is amine and polyamine biosynthesis; creatine biosynthesis; creatine from L-arginine and glycine: step 1/2. In terms of biological role, catalyzes the biosynthesis of guanidinoacetate, the immediate precursor of creatine. Creatine plays a vital role in energy metabolism in muscle tissues. May play a role in embryonic and central nervous system development. The chain is Glycine amidinotransferase, mitochondrial from Gallus gallus (Chicken).